The chain runs to 173 residues: Photosystem I assembly protein Ycf3 (173 aa).

3 TPR repeats span residues 35-68, 72-105, and 120-153; these read AFAYYRDGMSAQGDGEYAEALENYQEALRLEEDP, AFILYNMALVYASNGEHNRALEQYEQALALNAKM, and GSIAQEKGESDEADRRFDLAADFWSKAIRLAPNN.

This sequence belongs to the Ycf3 family.

The protein resides in the cellular thylakoid membrane. Functionally, essential for the assembly of the photosystem I (PSI) complex. May act as a chaperone-like factor to guide the assembly of the PSI subunits. This Synechococcus sp. (strain RCC307) protein is Photosystem I assembly protein Ycf3.